The following is a 124-amino-acid chain: Small ribosomal subunit protein uS11 (124 aa).

A disordered region spans residues 102–124 (RIGRIEDATPIPHDGTTPKRKNR).

This sequence belongs to the universal ribosomal protein uS11 family. As to quaternary structure, part of the 30S ribosomal subunit.

In terms of biological role, located on the platform of the 30S subunit. The sequence is that of Small ribosomal subunit protein uS11 from Methanococcus maripaludis (strain C5 / ATCC BAA-1333).